Reading from the N-terminus, the 178-residue chain is Colicin-A immunity protein (178 aa).

Residues 1–13 (MMNEHSIDTDNRK) lie on the Cytoplasmic side of the membrane. The helical transmembrane segment at 14 to 37 (ANNALYLFIIIGLIPLLCIFVVYY) threads the bilayer. At 38 to 68 (KTPDALLLRKIATSTENLPSITSSYNPLMTK) the chain is on the periplasmic side. Residues 69–89 (VMDIYCKTAPFLALILYILTF) form a helical membrane-spanning segment. Over 90–105 (KIRKLINNTDRNTVLR) the chain is Cytoplasmic. The chain crosses the membrane as a helical span at residues 106 to 123 (SCLLSPLVYAAIVYLFCF). Over 124-142 (RNFELTTAGRPVRLMATND) the chain is Periplasmic. The helical transmembrane segment at 143 to 165 (ATLLLFYIGLYSIIFFTTYITLF) threads the bilayer. Over 166–178 (TPVTAFKLLKKRQ) the chain is Cytoplasmic.

The protein localises to the cell inner membrane. In terms of biological role, this protein is able to protect a cell, which harbors the plasmid ColA encoding colicin A, against colicin A. This chain is Colicin-A immunity protein (cai), found in Citrobacter freundii.